We begin with the raw amino-acid sequence, 81 residues long: Centromere protein X (81 aa).

Position 1 is an N-acetylmethionine (M1).

Belongs to the CENP-X/MHF2 family. In terms of assembly, heterodimer with CENPX, sometimes called MHF; this interaction stabilizes both partners. MHF heterodimers can assemble to form tetrameric structures. MHF also coassemble with CENPT-CENPW heterodimers at centromeres to form the tetrameric CENP-T-W-S-X complex. Forms a discrete complex with FANCM and CENPX, called FANCM-MHF; this interaction, probably mediated by direct binding between CENPS and FANCM, leads to synergistic activation of double-stranded DNA binding and strongly stimulates FANCM-mediated DNA remodeling. Recruited by FANCM to the Fanconi anemia (FA) core complex, which consists of CENPS, CENPX, FANCA, FANCB, FANCC, FANCE, FANCF, FANCG, FANCL, FANCM, FAAP24 and FAAP100. The FA core complex associates with Bloom syndrome (BLM) complex, which consists of at least BLM, DNA topoisomerase 3-alpha (TOP3A), RMI1/BLAP75, RPA1/RPA70 and RPA2/RPA32. The super complex between FA and BLM is called BRAFT.

The protein localises to the nucleus. The protein resides in the chromosome. It is found in the centromere. It localises to the kinetochore. Its function is as follows. DNA-binding component of the Fanconi anemia (FA) core complex. Required for the normal activation of the FA pathway, leading to monoubiquitination of the FANCI-FANCD2 complex in response to DNA damage, cellular resistance to DNA cross-linking drugs, and prevention of chromosomal breakage. In complex with CENPS (MHF heterodimer), crucial cofactor for FANCM in both binding and ATP-dependent remodeling of DNA. Stabilizes FANCM. In complex with CENPS and FANCM (but not other FANC proteins), rapidly recruited to blocked forks and promotes gene conversion at blocked replication forks. In complex with CENPS, CENPT and CENPW (CENP-T-W-S-X heterotetramer), involved in the formation of a functional kinetochore outer plate, which is essential for kinetochore-microtubule attachment and faithful mitotic progression. As a component of MHF and CENP-T-W-S-X complexes, binds DNA and bends it to form a nucleosome-like structure. DNA-binding function is fulfilled in the presence of CENPS, with the following preference for DNA substates: Holliday junction &gt; double-stranded &gt; splay arm &gt; single-stranded. Does not bind DNA on its own. The chain is Centromere protein X (CENPX) from Homo sapiens (Human).